The sequence spans 382 residues: Flap endonuclease 1 (382 aa).

The N-domain stretch occupies residues 1-104 (MGIHGLAKLI…GELAKRSERR (104 aa)). Asp-34 is a Mg(2+) binding site. DNA contacts are provided by Arg-47 and Arg-70. Mg(2+) is bound by residues Asp-86, Glu-158, Glu-160, Asp-179, and Asp-181. Residues 122–253 (NIEKFNKRLV…KRAIDLIRQH (132 aa)) form an I-domain region. Glu-158 contacts DNA. 2 residues coordinate DNA: Gly-231 and Asp-233. Residue Asp-233 participates in Mg(2+) binding. Residues 336-344 (TQGRLDDFF) are interaction with PCNA. Positions 352-382 (STKRKEVESKGSAKKKAKTAGTPAGKFKRGK) are disordered.

The protein belongs to the XPG/RAD2 endonuclease family. FEN1 subfamily. As to quaternary structure, interacts with PCNA. Three molecules of fen1 bind to one PCNA trimer with each molecule binding to one PCNA monomer. PCNA stimulates the nuclease activity without altering cleavage specificity. The cofactor is Mg(2+). In terms of processing, phosphorylated. Phosphorylation upon DNA damage induces relocalization to the nuclear plasma.

It is found in the nucleus. The protein localises to the nucleolus. It localises to the nucleoplasm. Its subcellular location is the mitochondrion. In terms of biological role, structure-specific nuclease with 5'-flap endonuclease and 5'-3' exonuclease activities involved in DNA replication and repair. During DNA replication, cleaves the 5'-overhanging flap structure that is generated by displacement synthesis when DNA polymerase encounters the 5'-end of a downstream Okazaki fragment. It enters the flap from the 5'-end and then tracks to cleave the flap base, leaving a nick for ligation. Also involved in the long patch base excision repair (LP-BER) pathway, by cleaving within the apurinic/apyrimidinic (AP) site-terminated flap. Acts as a genome stabilization factor that prevents flaps from equilibrating into structures that lead to duplications and deletions. Also possesses 5'-3' exonuclease activity on nicked or gapped double-stranded DNA, and exhibits RNase H activity. Also involved in replication and repair of rDNA and in repairing mitochondrial DNA. This chain is Flap endonuclease 1 (fen1), found in Xenopus tropicalis (Western clawed frog).